Here is a 580-residue protein sequence, read N- to C-terminus: Laccase-20 (580 aa).

The signal sequence occupies residues Met-1–Ala-23. Plastocyanin-like domains are found at residues Val-31–Gly-147 and Lys-156–Val-310. N-linked (GlcNAc...) asparagine glycosylation is found at Asn-36 and Asn-42. His-81 and His-83 together coordinate Cu cation. N-linked (GlcNAc...) asparagine glycosylation is present at Asn-115. Positions 126 and 128 each coordinate Cu cation. Residues Asn-200, Asn-339, Asn-373, Asn-392, Asn-399, Asn-429, and Asn-460 are each glycosylated (N-linked (GlcNAc...) asparagine). One can recognise a Plastocyanin-like 3 domain in the interval Asp-419–Pro-561. Cu cation contacts are provided by Asn-478, His-481, His-483, His-540, Cys-541, His-542, His-546, and Met-551. The interval Gly-560–Ser-580 is disordered.

It belongs to the multicopper oxidase family. Cu cation serves as cofactor.

It is found in the secreted. Its subcellular location is the extracellular space. The protein localises to the apoplast. It carries out the reaction 4 hydroquinone + O2 = 4 benzosemiquinone + 2 H2O. Its function is as follows. Lignin degradation and detoxification of lignin-derived products. The sequence is that of Laccase-20 (LAC20) from Oryza sativa subsp. japonica (Rice).